The following is a 222-amino-acid chain: Putative auxin response factor 23 (222 aa).

A DNA-binding region (TF-B3) is located at residues 126–222 (FTKVLTASDT…ETGELRVGIR (97 aa)).

The protein belongs to the ARF family. In terms of assembly, homo and heterodimers.

It is found in the nucleus. Its function is as follows. Auxin response factors (ARFs) are transcriptional factors that binds specifically to the DNA sequence 5'-TGTCTC-3' found in the auxin-responsive promoter elements (AuxREs). Could act as transcriptional activator or repressor. Formation of heterodimers with Aux/IAA proteins may alter their ability to modulate early auxin response genes expression. This chain is Putative auxin response factor 23 (ARF23), found in Arabidopsis thaliana (Mouse-ear cress).